The following is a 528-amino-acid chain: Acid-sensing ion channel 1 (528 aa).

Topologically, residues 1-49 are cytoplasmic; it reads MELKAEEEEVGGVQPVSIQAFASSSTLHGLAHIFSYERLSLKRALWALC. The helical transmembrane segment at 50–66 threads the bilayer; that stretch reads FLGSLAVLLCVCTERVQ. The Extracellular portion of the chain corresponds to 67-427; the sequence is YYFHYHHVTK…ETIEQKKAYE (361 aa). Intrachain disulfides connect C93–C194, C172–C179, C290–C367, C310–C363, C314–C361, C323–C345, and C325–C337. Residues N368 and N395 are each glycosylated (N-linked (GlcNAc...) asparagine). The chain crosses the membrane as a discontinuously helical span at residues 428-458; sequence IAGLLGDIGGQMGLFIGASILTVLELFDYAY. The GAS motif; ion selectivity filter motif lies at 444–446; that stretch reads GAS. Over 459–528 the chain is Cytoplasmic; sequence EVIKHKLCRR…ARGTFEDFTC (70 aa). S479 is modified (phosphoserine; by PKA). S499 carries the post-translational modification Phosphoserine.

It belongs to the amiloride-sensitive sodium channel (TC 1.A.6) family. ASIC1 subfamily. Forms functional homotrimeric channels. Forms heterotrimers with other ASIC proteins, resulting in channels with distinct properties. Interacts with PICK1; regulates ASIC1 clustering in membranes. Interacts with STOM; alters heterotrimeric channels activity. PH-gating could be regulated by serine proteases. In terms of processing, phosphorylation by PKA regulates interaction with PICK1 and subcellular localization. Phosphorylation by PKC may regulate the channel. In terms of tissue distribution, expressed in neurons throughout the central and peripheral nervous system.

Its subcellular location is the cell membrane. It localises to the postsynaptic cell membrane. The protein resides in the cell projection. The protein localises to the dendrite. It catalyses the reaction Na(+)(in) = Na(+)(out). It carries out the reaction K(+)(in) = K(+)(out). The catalysed reaction is Li(+)(in) = Li(+)(out). The enzyme catalyses Ca(2+)(in) = Ca(2+)(out). Potentiated by FMRFamide-related neuropeptides, which are induced during inflammation and modulate pain responses. Inhibited by the diuretic drug amiloride. Spider venom psalmotoxin-1 inhibits the channel by locking it in its desensitized conformation. The homotrimeric channel is inhibited by the spider venom pi-theraphotoxin-Hm3a. Homotrimeric and heterotrimeric (with ASIC2 isoform 1) channels are inhibited by the snake venom mambalgin-1, which prevents proton-induced transitions from the resting closed state to the active and/or desensitized states. Inhibited by Texas coral snake toxin MitTx1. Functionally, forms voltage-independent, pH-gated trimeric sodium channels that act as postsynaptic excitatory receptors in the nervous system, playing a crucial role in regulating synaptic plasticity, learning, and memory. Upon extracellular pH drop this channel elicits transient, fast activating, and completely desensitizing inward currents. Displays high selectivity for sodium ions but can also permit the permeation of other cations. Regulates more or less directly intracellular calcium concentration and CaMKII phosphorylation, and thereby the density of dendritic spines. Modulates neuronal activity in the circuits underlying innate fear. Has high selectivity for sodium ions, but can also be permeable to other cations including calcium, lithium and potassium. Its function is as follows. Produces acid activated currents with a reduced amplitude and inactivates faster. Has high selectivity for sodium ions but also supports a calcium-mediated current which is sustained and maintained as long as acidic conditions are present. Also potentially permeable to lithium and potassium. In terms of biological role, has no measurable proton-gated sodium channel activity in vitro. The protein is Acid-sensing ion channel 1 of Homo sapiens (Human).